Consider the following 476-residue polypeptide: F-box protein At5g07670 (476 aa).

Residues 59 to 111 enclose the F-box domain; it reads PDFTLLLPDLILIRVIQKIPNSQRKNLSLVCKRWFRLHGRLVRSFKVSDWEFL.

The polypeptide is F-box protein At5g07670 (Arabidopsis thaliana (Mouse-ear cress)).